The chain runs to 510 residues: Probable inorganic carbon transporter subunit DabB (510 aa).

14 helical membrane passes run 9–29 (TLLT…LLFL), 37–57 (FVHI…LALV), 68–88 (WHLD…GLII), 105–122 (YFAL…AWLS), 125–145 (LRFM…LIGL), 158–178 (ISGY…IWLF), 204–224 (TGIN…WPFQ), 226–246 (WLIE…AGLV), 266–286 (QIIL…ISLV), 303–323 (GFML…HLIL), 355–375 (LWMI…WFIT), 382–402 (LVSA…LVVF), 410–430 (IAGL…HNSL), and 446–466 (APAV…CTFV).

It belongs to the inorganic carbon transporter (TC 9.A.2) DabB family. Forms a complex with DabA.

The protein localises to the cell membrane. Part of an energy-coupled inorganic carbon pump. Expression of both dabA and dabB (DA2) restores growth in ambient air to E.coli deleted of its carbonic anhydrase genes (called CAfree, deletion of 'can' and 'cynT'). This chain is Probable inorganic carbon transporter subunit DabB, found in Bacillus anthracis.